Here is a 402-residue protein sequence, read N- to C-terminus: Myb-related protein 1 (402 aa).

Positions 42–102 (TDAKPRLKWT…HLQKYRLSKN (61 aa)) constitute an HTH myb-type domain. Residues 73–98 (PKTIMKVMGIPGLTLYHLKSHLQKYR) constitute a DNA-binding region (H-T-H motif). Residues 148–168 (SDALQMQIEVQRRLHEQLEVQ) are a coiled coil. Positions 161–166 (LHEQLE) match the LHEQLE motif. Over residues 238-260 (QQMQKTYPPNSSLDSCLTSSEGT) the composition is skewed to polar residues. 3 disordered regions span residues 238–266 (QQMQ…APKM), 344–363 (EHRG…FNEN), and 382–402 (HDEN…FSWN).

The protein belongs to the MYB-CC family. In terms of assembly, isoforms 1 and 2: homodimer. Isoform 3: loss of dimerization. Expressed in phloem and/or cambium.

It localises to the nucleus. Its function is as follows. Transcription factor that may act on the GAL1 promoter. Acts redundantly with MYR2 as a repressor of flowering and organ elongation under decreased light intensity. Represses gibberellic acid (GA)-dependent responses and affects levels of bioactive GA. The protein is Myb-related protein 1 of Arabidopsis thaliana (Mouse-ear cress).